The primary structure comprises 319 residues: Cobalamin biosynthesis protein CbiB (319 aa).

Transmembrane regions (helical) follow at residues 56–76 (VMWI…LALA), 82–102 (WLGW…RSLA), 153–173 (VDGI…LAMA), 204–224 (VANY…AGLC), and 296–316 (LMWG…CWLS).

This sequence belongs to the CobD/CbiB family.

The protein localises to the cell membrane. Its pathway is cofactor biosynthesis; adenosylcobalamin biosynthesis. Its function is as follows. Converts cobyric acid to cobinamide by the addition of aminopropanol on the F carboxylic group. However, the true cosubstrate could be (R)-1-amino-2-propanol O-2-phosphate, leading to cobinamide phosphate. The sequence is that of Cobalamin biosynthesis protein CbiB from Salmonella arizonae (strain ATCC BAA-731 / CDC346-86 / RSK2980).